We begin with the raw amino-acid sequence, 246 residues long: 2,3-bisphosphoglycerate-dependent phosphoglycerate mutase (246 aa).

Residues 8–15 (RHGQSQWN), 21–22 (TG), R60, 87–90 (EKHY), K98, 114–115 (RR), and 183–184 (GN) contribute to the substrate site. Residue H9 is the Tele-phosphohistidine intermediate of the active site. The active-site Proton donor/acceptor is the E87.

Belongs to the phosphoglycerate mutase family. BPG-dependent PGAM subfamily. Homodimer.

The catalysed reaction is (2R)-2-phosphoglycerate = (2R)-3-phosphoglycerate. It participates in carbohydrate degradation; glycolysis; pyruvate from D-glyceraldehyde 3-phosphate: step 3/5. Functionally, catalyzes the interconversion of 2-phosphoglycerate and 3-phosphoglycerate. The sequence is that of 2,3-bisphosphoglycerate-dependent phosphoglycerate mutase from Dichelobacter nodosus (strain VCS1703A).